Consider the following 469-residue polypeptide: Acyltransferase clz18 (469 aa).

Transmembrane regions (helical) follow at residues 21–41 (GLLS…LGYD), 70–90 (LFTI…CLFF), 134–154 (LSLL…TGFF), 253–273 (ILAA…PLFW), 346–366 (GLIV…LYSL), 391–411 (IYLI…SWVW), and 424–444 (VGFG…AAIF).

It belongs to the acyltransferase 3 family.

The protein localises to the membrane. The protein operates within secondary metabolite biosynthesis. Acyltransferase; part of the gene cluster that mediates the biosynthesis of squalestatin S1 (SQS1, also known as zaragozic acid A), a heavily oxidized fungal polyketide that offers potent cholesterol lowering activity by targeting squalene synthase (SS). SQS1 is composed of a 2,8-dioxobicyclic[3.2.1]octane-3,4,5-tricarboxyclic acid core that is connected to two lipophilic polyketide arms. These initial steps feature the priming of an unusual benzoic acid starter unit onto the highly reducing polyketide synthase clz14, followed by oxaloacetate extension and product release to generate a tricarboxylic acid containing product. The phenylalanine ammonia lyase (PAL) clz10 and the acyl-CoA ligase clz12 are involved in transforming phenylalanine into benzoyl-CoA. The citrate synthase-like protein clz17 is involved in connecting the C-alpha-carbons of the hexaketide chain and oxaloacetate to afford the tricarboxylic acid unit. The potential hydrolytic enzymes, clz11 and clz13, are in close proximity to pks2 and may participate in product release. On the other side, the tetraketide arm is synthesized by a the squalestatin tetraketide synthase clz2 and enzymatically esterified to the core in the last biosynthetic step, by the acetyltransferase clz6. The biosynthesis of the tetraketide must involve 3 rounds of chain extension. After the first and second rounds methyl-transfer occurs, and in all rounds of extension the ketoreductase and dehydratase are active. The enoyl reductase and C-MeT of clz2 are not active in the final round of extension. The acetyltransferase clz6 appears to have a broad substrate selectivity for its acyl CoA substrate, allowing the in vitro synthesis of novel squalestatins. The biosynthesis of SQS1 requires several oxidative steps likely performed by oxidoreductases clz3, clz15 and clz16. Finally, in support of the identification of the cluster as being responsible for SQS1 production, the cluster contains a gene encoding a putative squalene synthase (SS) clz20, suggesting a likely mechanism for self-resistance. The chain is Acyltransferase clz18 from Cochliobolus lunatus (Filamentous fungus).